A 147-amino-acid chain; its full sequence is Hemoglobin subunit gamma-1 (147 aa).

Gly2 bears the N-acetylglycine; in form Hb F1 mark. The Globin domain maps to 3 to 147 (HFTEEDKATI…VASALSSRYH (145 aa)). The residue at position 13 (Thr13) is a Phosphothreonine. 3 positions are modified to phosphoserine: Ser45, Ser51, and Ser53. Residue Lys60 is modified to N6-acetyllysine. His64 provides a ligand contact to heme b. Lys83 is modified (N6-acetyllysine). Residue His93 coordinates heme b. S-nitrosocysteine is present on Cys94. At Ser140 the chain carries Phosphoserine.

Belongs to the globin family. As to quaternary structure, heterotetramer of two alpha chains and two gamma chains in fetal hemoglobin (Hb F). In the case of deletions affecting one or more of the alpha chains, the excess gamma chains form homotetramers that exhibit neither Bohr effect nor heme-heme cooperativity (hemoglobin Bart's). Post-translationally, acetylation of Gly-2 converts Hb F to the minor Hb F1. As to expression, red blood cells.

Functionally, gamma chains make up the fetal hemoglobin F, in combination with alpha chains. The sequence is that of Hemoglobin subunit gamma-1 (HBG1) from Homo sapiens (Human).